Here is a 149-residue protein sequence, read N- to C-terminus: D-aminoacyl-tRNA deacylase (149 aa).

A Gly-cisPro motif, important for rejection of L-amino acids motif is present at residues Gly137 to Pro138.

This sequence belongs to the DTD family. In terms of assembly, homodimer.

The protein resides in the cytoplasm. The catalysed reaction is glycyl-tRNA(Ala) + H2O = tRNA(Ala) + glycine + H(+). The enzyme catalyses a D-aminoacyl-tRNA + H2O = a tRNA + a D-alpha-amino acid + H(+). In terms of biological role, an aminoacyl-tRNA editing enzyme that deacylates mischarged D-aminoacyl-tRNAs. Also deacylates mischarged glycyl-tRNA(Ala), protecting cells against glycine mischarging by AlaRS. Acts via tRNA-based rather than protein-based catalysis; rejects L-amino acids rather than detecting D-amino acids in the active site. By recycling D-aminoacyl-tRNA to D-amino acids and free tRNA molecules, this enzyme counteracts the toxicity associated with the formation of D-aminoacyl-tRNA entities in vivo and helps enforce protein L-homochirality. This Clostridium beijerinckii (strain ATCC 51743 / NCIMB 8052) (Clostridium acetobutylicum) protein is D-aminoacyl-tRNA deacylase.